We begin with the raw amino-acid sequence, 109 residues long: Small ribosomal subunit protein bS20 (109 aa).

The disordered stretch occupies residues 1–26 (MANIKSAKKRAIQSEKRRKHNASRRS).

Belongs to the bacterial ribosomal protein bS20 family.

In terms of biological role, binds directly to 16S ribosomal RNA. The polypeptide is Small ribosomal subunit protein bS20 (Hamiltonella defensa subsp. Acyrthosiphon pisum (strain 5AT)).